The chain runs to 182 residues: Adenine phosphoribosyltransferase (182 aa).

It belongs to the purine/pyrimidine phosphoribosyltransferase family. Homodimer.

The protein resides in the cytoplasm. The catalysed reaction is AMP + diphosphate = 5-phospho-alpha-D-ribose 1-diphosphate + adenine. It participates in purine metabolism; AMP biosynthesis via salvage pathway; AMP from adenine: step 1/1. Catalyzes a salvage reaction resulting in the formation of AMP, that is energically less costly than de novo synthesis. The protein is Adenine phosphoribosyltransferase of Campylobacter jejuni subsp. jejuni serotype O:2 (strain ATCC 700819 / NCTC 11168).